The sequence spans 255 residues: Triosephosphate isomerase (255 aa).

9–11 (NWK) lines the substrate pocket. The active-site Electrophile is H95. E167 (proton acceptor) is an active-site residue. Substrate contacts are provided by residues G173, S212, and 233-234 (GG).

This sequence belongs to the triosephosphate isomerase family. As to quaternary structure, homodimer.

The protein resides in the cytoplasm. It catalyses the reaction D-glyceraldehyde 3-phosphate = dihydroxyacetone phosphate. It participates in carbohydrate biosynthesis; gluconeogenesis. The protein operates within carbohydrate degradation; glycolysis; D-glyceraldehyde 3-phosphate from glycerone phosphate: step 1/1. Its function is as follows. Involved in the gluconeogenesis. Catalyzes stereospecifically the conversion of dihydroxyacetone phosphate (DHAP) to D-glyceraldehyde-3-phosphate (G3P). This Salmonella dublin (strain CT_02021853) protein is Triosephosphate isomerase.